A 149-amino-acid chain; its full sequence is Large ribosomal subunit protein uL22 (149 aa).

The protein belongs to the universal ribosomal protein uL22 family. In terms of assembly, part of the 50S ribosomal subunit.

This protein binds specifically to 23S rRNA; its binding is stimulated by other ribosomal proteins, e.g. L4, L17, and L20. It is important during the early stages of 50S assembly. It makes multiple contacts with different domains of the 23S rRNA in the assembled 50S subunit and ribosome. Its function is as follows. The globular domain of the protein is located near the polypeptide exit tunnel on the outside of the subunit, while an extended beta-hairpin is found that lines the wall of the exit tunnel in the center of the 70S ribosome. The polypeptide is Large ribosomal subunit protein uL22 (Petrotoga mobilis (strain DSM 10674 / SJ95)).